A 263-amino-acid chain; its full sequence is Indole-3-glycerol phosphate synthase (263 aa).

This sequence belongs to the TrpC family.

The catalysed reaction is 1-(2-carboxyphenylamino)-1-deoxy-D-ribulose 5-phosphate + H(+) = (1S,2R)-1-C-(indol-3-yl)glycerol 3-phosphate + CO2 + H2O. Its pathway is amino-acid biosynthesis; L-tryptophan biosynthesis; L-tryptophan from chorismate: step 4/5. The chain is Indole-3-glycerol phosphate synthase from Desulfosudis oleivorans (strain DSM 6200 / JCM 39069 / Hxd3) (Desulfococcus oleovorans).